A 205-amino-acid chain; its full sequence is Small ribosomal subunit protein uS4 (205 aa).

The tract at residues 25–48 (KTIEARPTPPGQHGAKNTRRKKSD) is disordered. The S4 RNA-binding domain occupies 94–157 (RRLDNVVFRA…TKLPIVVETL (64 aa)).

It belongs to the universal ribosomal protein uS4 family. Part of the 30S ribosomal subunit. Contacts protein S5. The interaction surface between S4 and S5 is involved in control of translational fidelity.

Functionally, one of the primary rRNA binding proteins, it binds directly to 16S rRNA where it nucleates assembly of the body of the 30S subunit. Its function is as follows. With S5 and S12 plays an important role in translational accuracy. The chain is Small ribosomal subunit protein uS4 from Methylobacillus flagellatus (strain ATCC 51484 / DSM 6875 / VKM B-1610 / KT).